The chain runs to 310 residues: Ribonuclease Z (310 aa).

H64, H66, D68, H69, H146, D215, and H273 together coordinate Zn(2+). Residue D68 is the Proton acceptor of the active site.

It belongs to the RNase Z family. Homodimer. Zn(2+) is required as a cofactor.

The enzyme catalyses Endonucleolytic cleavage of RNA, removing extra 3' nucleotides from tRNA precursor, generating 3' termini of tRNAs. A 3'-hydroxy group is left at the tRNA terminus and a 5'-phosphoryl group is left at the trailer molecule.. Its function is as follows. Zinc phosphodiesterase, which displays some tRNA 3'-processing endonuclease activity. Probably involved in tRNA maturation, by removing a 3'-trailer from precursor tRNA. This Aeropyrum pernix (strain ATCC 700893 / DSM 11879 / JCM 9820 / NBRC 100138 / K1) protein is Ribonuclease Z.